A 239-amino-acid polypeptide reads, in one-letter code: MNIEQFQSMLEEKGITLSSRQLEQFEIYFETLVEWNEKMNLTAITEKEEVYLKHFFDSITAAFYYDFSKPFSICDVGAGAGFPSIPLKICFPHLKVTIVDSLQKRINFLNHLAQKLELSDVAFCHDRAETFGKKEGVREAYDIVMARAVARLSVLSELCLPLVKVGGTFIAMKGAAAKEEIENGKYALEVLGGDLKEMSTFQLPFEESERNILLIEKKRKTPKKYPRKPGTPNKLPIEK.

S-adenosyl-L-methionine contacts are provided by residues G77, F82, 128–129 (AE), and R147.

The protein belongs to the methyltransferase superfamily. RNA methyltransferase RsmG family.

The protein resides in the cytoplasm. In terms of biological role, specifically methylates the N7 position of guanine in position 535 of 16S rRNA. This Bacillus cereus (strain ZK / E33L) protein is Ribosomal RNA small subunit methyltransferase G.